We begin with the raw amino-acid sequence, 361 residues long: Serine/threonine-protein kinase SAPK9 (361 aa).

The Protein kinase domain occupies 22-278 (YELVKEIGSG…MPEIKNHPWF (257 aa)). Residues 28 to 36 (IGSGNFGVA) and Lys51 contribute to the ATP site. Asp141 functions as the Proton acceptor in the catalytic mechanism.

It belongs to the protein kinase superfamily. Ser/Thr protein kinase family. As to quaternary structure, interacts with BZIP46. In terms of processing, may be phosphorylated. Expressed in leaf sheaths and roots. Expressed in shoots of young seedlings.

It is found in the cytoplasm. The protein localises to the nucleus. It catalyses the reaction L-seryl-[protein] + ATP = O-phospho-L-seryl-[protein] + ADP + H(+). It carries out the reaction L-threonyl-[protein] + ATP = O-phospho-L-threonyl-[protein] + ADP + H(+). With respect to regulation, activated by hyperosmotic stress and abscisic acid (ABA). Functionally, may play a role in signal transduction of hyperosmotic response. Can phosphorylate BZIP46 in vitro. This Oryza sativa subsp. japonica (Rice) protein is Serine/threonine-protein kinase SAPK9 (SAPK9).